The chain runs to 34 residues: Cytochrome c oxidase polypeptide 2A (34 aa).

Met1 bears the N-formylmethionine mark. A helical membrane pass occupies residues 4-34 (KPKGALAVILVLTLTILVFWLGVYAVFFARG).

It is found in the cell membrane. It catalyses the reaction 4 Fe(II)-[cytochrome c] + O2 + 8 H(+)(in) = 4 Fe(III)-[cytochrome c] + 2 H2O + 4 H(+)(out). This is Cytochrome c oxidase polypeptide 2A (cbaD) from Thermus thermophilus (strain ATCC 27634 / DSM 579 / HB8).